Here is a 287-residue protein sequence, read N- to C-terminus: Transmembrane protein 71 (287 aa).

The tract at residues 1-25 (MYRDSPLMSTPVANDSRSDEGPSGK) is disordered. 2 helical membrane-spanning segments follow: residues 218–238 (AGLM…LVIS) and 244–264 (FVGG…IAYV).

This sequence belongs to the TMEM71 family.

It localises to the membrane. This chain is Transmembrane protein 71 (Tmem71), found in Mus musculus (Mouse).